We begin with the raw amino-acid sequence, 453 residues long: Aldehyde dehydrogenase, dimeric NADP-preferring (453 aa).

At Ser-2 the chain carries N-acetylserine. The residue at position 178 (Lys-178) is an N6-acetyllysine. NAD(+) is bound at residue 188–193; it reads GNTAVG. Lys-194 carries the N6-acetyllysine modification. Residues Glu-210 and Cys-244 contribute to the active site.

It belongs to the aldehyde dehydrogenase family. In terms of assembly, homodimer.

It localises to the cytoplasm. The enzyme catalyses an aldehyde + NAD(+) + H2O = a carboxylate + NADH + 2 H(+). It carries out the reaction octanal + NAD(+) + H2O = octanoate + NADH + 2 H(+). ALDHs play a major role in the detoxification of alcohol-derived acetaldehyde. They are involved in the metabolism of corticosteroids, biogenic amines, neurotransmitters, and lipid peroxidation. Oxidizes medium and long chain aldehydes into non-toxic fatty acids. Preferentially oxidizes aromatic aldehyde substrates. Comprises about 50 percent of corneal epithelial soluble proteins. May play a role in preventing corneal damage caused by ultraviolet light. The protein is Aldehyde dehydrogenase, dimeric NADP-preferring (ALDH3A1) of Canis lupus familiaris (Dog).